A 261-amino-acid polypeptide reads, in one-letter code: Mediator of RNA polymerase II transcription subunit 7 (261 aa).

Disordered stretches follow at residues 1 to 55 (MAEA…TPAE) and 224 to 250 (DSAS…ANSS). 2 stretches are compositionally biased toward basic and acidic residues: residues 23 to 45 (FTPD…EDGK) and 230 to 240 (GENDTAKRTTG). Over residues 241–250 (DQDANNANSS) the composition is skewed to polar residues.

Belongs to the Mediator complex subunit 7 family. Component of the Mediator complex.

The protein resides in the nucleus. Component of the Mediator complex, a coactivator involved in the regulated transcription of nearly all RNA polymerase II-dependent genes. Mediator functions as a bridge to convey information from gene-specific regulatory proteins to the basal RNA polymerase II transcription machinery. Mediator is recruited to promoters by direct interactions with regulatory proteins and serves as a scaffold for the assembly of a functional preinitiation complex with RNA polymerase II and the general transcription factors. This Neosartorya fischeri (strain ATCC 1020 / DSM 3700 / CBS 544.65 / FGSC A1164 / JCM 1740 / NRRL 181 / WB 181) (Aspergillus fischerianus) protein is Mediator of RNA polymerase II transcription subunit 7 (med7).